A 325-amino-acid chain; its full sequence is Probable exonuclease subunit 1 (325 aa).

Could consist of two subunits: D13 and D12.

Possible exonuclease involved in phage DNA recombination, replication, and repair. This Escherichia coli (Enterobacteria phage T5) protein is Probable exonuclease subunit 1 (D12).